The chain runs to 202 residues: Peptidyl-tRNA hydrolase (202 aa).

Residue Y22 coordinates tRNA. Catalysis depends on H27, which acts as the Proton acceptor. TRNA contacts are provided by F69, N71, and N117.

The protein belongs to the PTH family. In terms of assembly, monomer.

It localises to the cytoplasm. The catalysed reaction is an N-acyl-L-alpha-aminoacyl-tRNA + H2O = an N-acyl-L-amino acid + a tRNA + H(+). Its function is as follows. Hydrolyzes ribosome-free peptidyl-tRNAs (with 1 or more amino acids incorporated), which drop off the ribosome during protein synthesis, or as a result of ribosome stalling. Catalyzes the release of premature peptidyl moieties from peptidyl-tRNA molecules trapped in stalled 50S ribosomal subunits, and thus maintains levels of free tRNAs and 50S ribosomes. This Thiobacillus denitrificans (strain ATCC 25259 / T1) protein is Peptidyl-tRNA hydrolase.